The following is a 196-amino-acid chain: ATP-dependent Clp protease proteolytic subunit (196 aa).

The active-site Nucleophile is the S98. Residue H123 is part of the active site.

The protein belongs to the peptidase S14 family. Fourteen ClpP subunits assemble into 2 heptameric rings which stack back to back to give a disk-like structure with a central cavity, resembling the structure of eukaryotic proteasomes.

The protein localises to the cytoplasm. The enzyme catalyses Hydrolysis of proteins to small peptides in the presence of ATP and magnesium. alpha-casein is the usual test substrate. In the absence of ATP, only oligopeptides shorter than five residues are hydrolyzed (such as succinyl-Leu-Tyr-|-NHMec, and Leu-Tyr-Leu-|-Tyr-Trp, in which cleavage of the -Tyr-|-Leu- and -Tyr-|-Trp bonds also occurs).. Cleaves peptides in various proteins in a process that requires ATP hydrolysis. Has a chymotrypsin-like activity. Plays a major role in the degradation of misfolded proteins. This Anoxybacillus flavithermus (strain DSM 21510 / WK1) protein is ATP-dependent Clp protease proteolytic subunit.